We begin with the raw amino-acid sequence, 361 residues long: S-adenosylmethionine:tRNA ribosyltransferase-isomerase (361 aa).

This sequence belongs to the QueA family. In terms of assembly, monomer.

Its subcellular location is the cytoplasm. The enzyme catalyses 7-aminomethyl-7-carbaguanosine(34) in tRNA + S-adenosyl-L-methionine = epoxyqueuosine(34) in tRNA + adenine + L-methionine + 2 H(+). It participates in tRNA modification; tRNA-queuosine biosynthesis. Functionally, transfers and isomerizes the ribose moiety from AdoMet to the 7-aminomethyl group of 7-deazaguanine (preQ1-tRNA) to give epoxyqueuosine (oQ-tRNA). The sequence is that of S-adenosylmethionine:tRNA ribosyltransferase-isomerase from Actinobacillus pleuropneumoniae serotype 3 (strain JL03).